The following is a 380-amino-acid chain: Cytochrome b (380 aa).

Helical transmembrane passes span 34 to 54, 78 to 99, 114 to 134, and 179 to 199; these read FGSLLGLCLITQILTGLFLAM, WLLRNVHANGASLFFICMYCHI, WNVGVILFLVTVLTAFVGYVL, and FFAFHFLFPFIIAALAIIDLV. The heme b site is built by H84 and H98. H183 is a heme b binding site. H202 is an a ubiquinone binding site. A run of 4 helical transmembrane segments spans residues 227-247, 289-309, 321-341, and 348-369; these read TKDTVGFIALIAALFVLALLF, LGGVIALVAAILVLFLMPLLN, LSQATFWILVATFFVLTWIGS, and FVLIGQIASLLYFSLFIFGFPL.

Belongs to the cytochrome b family. As to quaternary structure, the main subunits of complex b-c1 are: cytochrome b, cytochrome c1 and the Rieske protein. Heme b serves as cofactor.

It localises to the mitochondrion inner membrane. In terms of biological role, component of the ubiquinol-cytochrome c reductase complex (complex III or cytochrome b-c1 complex) that is part of the mitochondrial respiratory chain. The b-c1 complex mediates electron transfer from ubiquinol to cytochrome c. Contributes to the generation of a proton gradient across the mitochondrial membrane that is then used for ATP synthesis. The sequence is that of Cytochrome b (MT-CYB) from Paracentrotus lividus (Common sea urchin).